We begin with the raw amino-acid sequence, 399 residues long: Probable WRKY transcription factor 48 (399 aa).

2 stretches are compositionally biased toward basic and acidic residues: residues Met-1–His-11 and Lys-19–Gln-38. Disordered regions lie at residues Met-1 to Asp-57 and Ala-138 to Lys-202. Low complexity predominate over residues Val-143 to Asn-161. The span at Glu-162–Lys-171 shows a compositional bias: polar residues. A compositionally biased stretch (low complexity) spans Gln-184–Gln-193. The WRKY DNA-binding region spans Ser-215 to Pro-280. The tract at residues Gln-361–Lys-399 is disordered. Residues Gln-383–Lys-399 are compositionally biased toward polar residues.

The protein resides in the nucleus. Functionally, transcription factor. Interacts specifically with the W box (5'-(T)TGAC[CT]-3'), a frequently occurring elicitor-responsive cis-acting element. This is Probable WRKY transcription factor 48 (WRKY48) from Arabidopsis thaliana (Mouse-ear cress).